The primary structure comprises 86 residues: Putative membrane protein insertion efficiency factor (86 aa).

Residues 67-86 form a disordered region; it reads LHEGGDDPVPPVKNNDNREH.

It belongs to the UPF0161 family.

The protein localises to the cell inner membrane. Its function is as follows. Could be involved in insertion of integral membrane proteins into the membrane. The polypeptide is Putative membrane protein insertion efficiency factor (Photorhabdus laumondii subsp. laumondii (strain DSM 15139 / CIP 105565 / TT01) (Photorhabdus luminescens subsp. laumondii)).